Reading from the N-terminus, the 129-residue chain is Probable tautomerase YrdN (129 aa).

The active-site Proton acceptor; via imino nitrogen is the Pro-2.

Belongs to the 4-oxalocrotonate tautomerase family.

Its function is as follows. Putative target of GltR. The chain is Probable tautomerase YrdN (yrdN) from Bacillus subtilis (strain 168).